Here is an 866-residue protein sequence, read N- to C-terminus: Leucine--tRNA ligase (866 aa).

Positions proline 42–histidine 52 match the 'HIGH' region motif. The short motif at threonine 624–serine 628 is the 'KMSKS' region element. Position 627 (lysine 627) interacts with ATP.

This sequence belongs to the class-I aminoacyl-tRNA synthetase family.

Its subcellular location is the cytoplasm. The enzyme catalyses tRNA(Leu) + L-leucine + ATP = L-leucyl-tRNA(Leu) + AMP + diphosphate. The polypeptide is Leucine--tRNA ligase (Nitrosospira multiformis (strain ATCC 25196 / NCIMB 11849 / C 71)).